The following is a 279-amino-acid chain: Dehydrogenase/reductase SDR family member 4 (279 aa).

37-61 (LVTASTDGIGLAIARRLAQDGAHVV) is an NADP(+) binding site. Lysine 93 is subject to N6-acetyllysine; alternate. Lysine 93 carries the N6-succinyllysine; alternate modification. Position 170 (serine 170) interacts with substrate. Residue tyrosine 183 is the Proton acceptor of the active site. Lysine 187 is an NADP(+) binding site. An N6-acetyllysine; alternate modification is found at lysine 217. Position 217 is an N6-succinyllysine; alternate (lysine 217). Serine 221 bears the Phosphoserine mark. Residues lysine 228 and lysine 235 each carry the N6-succinyllysine modification. Residues 277 to 279 (SRL) carry the Peroxisomal targeting signal motif.

Belongs to the short-chain dehydrogenases/reductases (SDR) family. In terms of assembly, homotetramer. Detected in heart, kidney, liver and small intestine. Detected at lower levels in brain, lung, stomach and spleen.

Its subcellular location is the peroxisome. The enzyme catalyses a secondary alcohol + NADP(+) = a ketone + NADPH + H(+). It carries out the reaction 3alpha-hydroxy-5beta-pregnan-20-one + NADP(+) = 5beta-pregnan-3,20-dione + NADPH + H(+). The catalysed reaction is 5beta-dihydrotestosterone + NADPH + H(+) = 5beta-androstane-3alpha,17beta-diol + NADP(+). It catalyses the reaction all-trans-retinol + NADP(+) = all-trans-retinal + NADPH + H(+). The enzyme catalyses isatin + NADPH + H(+) = 3-hydroxyindolin-2-one + NADP(+). Its activity is regulated as follows. Inhibited by kaempferol, quercetin, genistein and myristic acid. In terms of biological role, NADPH-dependent oxidoreductase which catalyzes the reduction of a variety of compounds bearing carbonyl groups including ketosteroids, alpha-dicarbonyl compounds, aldehydes, aromatic ketones and quinones. Reduces all-trans-retinal and 9-cis retinal. Reduces 3-ketosteroids and benzil into 3alpha-hydroxysteroids and S-benzoin, respectively, in contrast to the stereoselectivity of primates DHRS4s which produce 3beta-hydroxysteroids and R-benzoin. In the reverse reaction, catalyzes the NADP-dependent oxidation of 3alpha-hydroxysteroids and alcohol, but with much lower efficiency. Involved in the metabolism of 3alpha-hydroxysteroids, retinoid, isatin and xenobiotic carbonyl compounds. The protein is Dehydrogenase/reductase SDR family member 4 (DHRS4) of Sus scrofa (Pig).